The primary structure comprises 364 residues: UDP-N-acetylglucosamine--N-acetylmuramyl-(pentapeptide) pyrophosphoryl-undecaprenol N-acetylglucosamine transferase (364 aa).

UDP-N-acetyl-alpha-D-glucosamine contacts are provided by residues 10–12 (TGG), N126, R167, S199, I253, and Q298.

Belongs to the glycosyltransferase 28 family. MurG subfamily.

It is found in the cell inner membrane. The catalysed reaction is di-trans,octa-cis-undecaprenyl diphospho-N-acetyl-alpha-D-muramoyl-L-alanyl-D-glutamyl-meso-2,6-diaminopimeloyl-D-alanyl-D-alanine + UDP-N-acetyl-alpha-D-glucosamine = di-trans,octa-cis-undecaprenyl diphospho-[N-acetyl-alpha-D-glucosaminyl-(1-&gt;4)]-N-acetyl-alpha-D-muramoyl-L-alanyl-D-glutamyl-meso-2,6-diaminopimeloyl-D-alanyl-D-alanine + UDP + H(+). Its pathway is cell wall biogenesis; peptidoglycan biosynthesis. Functionally, cell wall formation. Catalyzes the transfer of a GlcNAc subunit on undecaprenyl-pyrophosphoryl-MurNAc-pentapeptide (lipid intermediate I) to form undecaprenyl-pyrophosphoryl-MurNAc-(pentapeptide)GlcNAc (lipid intermediate II). This chain is UDP-N-acetylglucosamine--N-acetylmuramyl-(pentapeptide) pyrophosphoryl-undecaprenol N-acetylglucosamine transferase, found in Amoebophilus asiaticus (strain 5a2).